Consider the following 363-residue polypeptide: Flagellar P-ring protein (363 aa).

The N-terminal stretch at 1 to 20 (MKCKLIFAVFMLAFSMPSQA) is a signal peptide.

It belongs to the FlgI family. As to quaternary structure, the basal body constitutes a major portion of the flagellar organelle and consists of four rings (L,P,S, and M) mounted on a central rod.

The protein resides in the periplasm. Its subcellular location is the bacterial flagellum basal body. Its function is as follows. Assembles around the rod to form the L-ring and probably protects the motor/basal body from shearing forces during rotation. In Shewanella oneidensis (strain ATCC 700550 / JCM 31522 / CIP 106686 / LMG 19005 / NCIMB 14063 / MR-1), this protein is Flagellar P-ring protein.